Consider the following 447-residue polypeptide: Cysteine--tRNA ligase (447 aa).

A Zn(2+)-binding site is contributed by Cys-28. The short motif at 30 to 40 (PTVYNYIHIGN) is the 'HIGH' region element. Zn(2+) contacts are provided by Cys-211, His-236, and Glu-240. Residues 268 to 272 (KMSKS) carry the 'KMSKS' region motif. Lys-271 contributes to the ATP binding site.

It belongs to the class-I aminoacyl-tRNA synthetase family. As to quaternary structure, monomer. The cofactor is Zn(2+).

It is found in the cytoplasm. The catalysed reaction is tRNA(Cys) + L-cysteine + ATP = L-cysteinyl-tRNA(Cys) + AMP + diphosphate. This Streptococcus agalactiae serotype V (strain ATCC BAA-611 / 2603 V/R) protein is Cysteine--tRNA ligase.